A 154-amino-acid chain; its full sequence is UPF0178 protein GM21_2006 (154 aa).

This sequence belongs to the UPF0178 family.

In Geobacter sp. (strain M21), this protein is UPF0178 protein GM21_2006.